A 196-amino-acid polypeptide reads, in one-letter code: uncharacterized protein (196 aa).

The chain crosses the membrane as a helical span at residues 22–42 (MIIIPMALLVFILIIGSFFAI).

The protein localises to the cell membrane. This is an uncharacterized protein from Lactobacillus acidophilus (strain ATCC 700396 / NCK56 / N2 / NCFM).